We begin with the raw amino-acid sequence, 213 residues long: tRNA (guanine-N(7)-)-methyltransferase (213 aa).

Glu43, Asp68, Asn95, and Asn117 together coordinate S-adenosyl-L-methionine. Substrate is bound by residues Asp153 and 190–193; that span reads TEYE.

Belongs to the class I-like SAM-binding methyltransferase superfamily. TrmB family.

The enzyme catalyses guanosine(46) in tRNA + S-adenosyl-L-methionine = N(7)-methylguanosine(46) in tRNA + S-adenosyl-L-homocysteine. It participates in tRNA modification; N(7)-methylguanine-tRNA biosynthesis. In terms of biological role, catalyzes the formation of N(7)-methylguanine at position 46 (m7G46) in tRNA. The sequence is that of tRNA (guanine-N(7)-)-methyltransferase from Desulfitobacterium hafniense (strain DSM 10664 / DCB-2).